The primary structure comprises 449 residues: UDP-N-acetylmuramoylalanine--D-glutamate ligase (449 aa).

Residue 116–122 (GSNGKST) coordinates ATP.

The protein belongs to the MurCDEF family.

The protein resides in the cytoplasm. It catalyses the reaction UDP-N-acetyl-alpha-D-muramoyl-L-alanine + D-glutamate + ATP = UDP-N-acetyl-alpha-D-muramoyl-L-alanyl-D-glutamate + ADP + phosphate + H(+). It functions in the pathway cell wall biogenesis; peptidoglycan biosynthesis. Cell wall formation. Catalyzes the addition of glutamate to the nucleotide precursor UDP-N-acetylmuramoyl-L-alanine (UMA). The chain is UDP-N-acetylmuramoylalanine--D-glutamate ligase from Shewanella violacea (strain JCM 10179 / CIP 106290 / LMG 19151 / DSS12).